A 560-amino-acid polypeptide reads, in one-letter code: MTNISLKPNEVGVFAIGGLGEIGKNTYGIEYQDEIIIVDAGIKFPEDDLLGIDYVIPDYSYIVDNLDRVKALVITHGHEDHIGGIPFLLKQANIPIYAGPLALALIRGKLEEHGLWREATVYEINHNTELTFKNMSVTFFKTTHSIPEPVGIVIHTPQGKIICTGDFKFDFTPVGDPADLQRMAALGEEGVLCLLSDSTNAEIPTFTNSEKVVGQSILKIIEGIHGRIIFASFASNIYRLQQAAEAAVKTGRKIAVFGRSMEKAIVNGIELGYIKVPKGTFIEPSELKNLHASEVLIMCTGSQGESMAALARIANGTHRQVTLQPGDTVIFSSSPIPGNTTSVNKLINTIQEAGVDVIHGKVNNIHTSGHGGQQEQKLMLSLIKPKYFMPVHGEYRMQKIHAGLAMDIGIPKENIFIMENGDVLALTSDSARIAGHFNAQDIYVDGNGIGDIGAAVLRDRRDLSEDGVVLAVATVDFNTQMILAGPDILSRGFIYMRESGDLIRESQRVLFNAIRIALKNKDASIQSVNGAIVNALRPFLYEKTEREPIIIPMVLTPDKH.

Zn(2+)-binding residues include histidine 76, histidine 78, aspartate 80, histidine 81, histidine 144, and aspartate 166. 366–370 (HTSGH) provides a ligand contact to substrate. Position 392 (histidine 392) interacts with Zn(2+).

Belongs to the metallo-beta-lactamase superfamily. RNA-metabolizing metallo-beta-lactamase-like family. Bacterial RNase J subfamily. As to quaternary structure, homodimer, may be a subunit of the RNA degradosome. Zn(2+) is required as a cofactor.

The protein localises to the cytoplasm. An RNase that has 5'-3' exonuclease and possibly endonuclease activity. Involved in maturation of rRNA and in some organisms also mRNA maturation and/or decay. Has an overlapping but not completely redundant role with RNase J2 in the decay of mRNA. The sequence is that of Ribonuclease J 1 from Streptococcus pyogenes serotype M3 (strain ATCC BAA-595 / MGAS315).